Here is a 396-residue protein sequence, read N- to C-terminus: Ribosomal RNA large subunit methyltransferase I (396 aa).

The 78-residue stretch at 2–79 (TSAVYLQAGR…EKEVIDQHFF (78 aa)) folds into the PUA domain.

The protein belongs to the methyltransferase superfamily. RlmI family.

The protein localises to the cytoplasm. It carries out the reaction cytidine(1962) in 23S rRNA + S-adenosyl-L-methionine = 5-methylcytidine(1962) in 23S rRNA + S-adenosyl-L-homocysteine + H(+). Its function is as follows. Specifically methylates the cytosine at position 1962 (m5C1962) of 23S rRNA. The protein is Ribosomal RNA large subunit methyltransferase I of Pseudoalteromonas translucida (strain TAC 125).